The following is a 148-amino-acid chain: SsrA-binding protein (148 aa).

The interval 119 to 148 is disordered; that stretch reads AKGKKQHDKRQSMKEADWKREKQRLIKHTR. The span at 127 to 142 shows a compositional bias: basic and acidic residues; sequence KRQSMKEADWKREKQR.

It belongs to the SmpB family.

It localises to the cytoplasm. In terms of biological role, required for rescue of stalled ribosomes mediated by trans-translation. Binds to transfer-messenger RNA (tmRNA), required for stable association of tmRNA with ribosomes. tmRNA and SmpB together mimic tRNA shape, replacing the anticodon stem-loop with SmpB. tmRNA is encoded by the ssrA gene; the 2 termini fold to resemble tRNA(Ala) and it encodes a 'tag peptide', a short internal open reading frame. During trans-translation Ala-aminoacylated tmRNA acts like a tRNA, entering the A-site of stalled ribosomes, displacing the stalled mRNA. The ribosome then switches to translate the ORF on the tmRNA; the nascent peptide is terminated with the 'tag peptide' encoded by the tmRNA and targeted for degradation. The ribosome is freed to recommence translation, which seems to be the essential function of trans-translation. This Neisseria gonorrhoeae (strain ATCC 700825 / FA 1090) protein is SsrA-binding protein.